A 236-amino-acid polypeptide reads, in one-letter code: Eukaryotic translation initiation factor 3 subunit K (236 aa).

A PCI domain is found at 48–218 (CDCNANRTLL…EAKKAEIRED (171 aa)).

Belongs to the eIF-3 subunit K family.

Its subcellular location is the cytoplasm. Component of the eukaryotic translation initiation factor 3 (eIF-3) complex, which is involved in protein synthesis of a specialized repertoire of mRNAs and, together with other initiation factors, stimulates binding of mRNA and methionyl-tRNAi to the 40S ribosome. The eIF-3 complex specifically targets and initiates translation of a subset of mRNAs involved in cell proliferation. In Pyricularia oryzae (strain Y34) (Rice blast fungus), this protein is Eukaryotic translation initiation factor 3 subunit K.